Reading from the N-terminus, the 350-residue chain is Small ribosomal subunit biogenesis GTPase RsgA (350 aa).

Residues 1–17 show a composition bias toward polar residues; the sequence is MSKNKLSKGQQRRVNAN. Positions 1–27 are disordered; the sequence is MSKNKLSKGQQRRVNANHQRRLKTSAE. The CP-type G domain occupies 104–273; that stretch reads TSVLTRPDFY…VIDSPGVREF (170 aa). Residues 160–163 and 214–222 each bind GTP; these read NKID and GQSGVGKSS. Residues cysteine 297, cysteine 302, histidine 304, and cysteine 310 each coordinate Zn(2+).

The protein belongs to the TRAFAC class YlqF/YawG GTPase family. RsgA subfamily. As to quaternary structure, monomer. Associates with 30S ribosomal subunit, binds 16S rRNA. It depends on Zn(2+) as a cofactor.

It localises to the cytoplasm. Functionally, one of several proteins that assist in the late maturation steps of the functional core of the 30S ribosomal subunit. Helps release RbfA from mature subunits. May play a role in the assembly of ribosomal proteins into the subunit. Circularly permuted GTPase that catalyzes slow GTP hydrolysis, GTPase activity is stimulated by the 30S ribosomal subunit. The chain is Small ribosomal subunit biogenesis GTPase RsgA from Salmonella typhi.